The chain runs to 710 residues: Protein Smaug homolog 1 (710 aa).

Disordered regions lie at residues Ala-276–Glu-319 and Asn-441–Leu-476. Residues Gln-309–Asp-318 are compositionally biased toward polar residues. In terms of domain architecture, SAM spans Glu-319–Lys-379.

It belongs to the SMAUG family.

The protein resides in the cytoplasm. The protein localises to the cell projection. Its subcellular location is the dendrite. It is found in the synapse. It localises to the synaptosome. Functionally, acts as a translational repressor. This chain is Protein Smaug homolog 1 (samd4a), found in Xenopus laevis (African clawed frog).